We begin with the raw amino-acid sequence, 342 residues long: MLTNASQVLLRNSDLFKDHSVLVLNYEGDTLPKALLESASSVSALALDFHHHLIMQPYAAKNLQLYFGHQLPTQECFDSVIVYFPKAKALAPYLFNLAGKHLKPQGQLIVVGENKGGIKSLPKQLPDYFDKAFKADNARHCIVFTSELNREAPEIKLQDWYSEYQLQTPQGEITICNMVGVFSEKKLDEGTKLLLENLPKMQGNVLDFGCGAGVIAAALLTAQPKLTLDCVDINAMALTSCDLTMQANGLSANIFASDGMAQTSGHYDGIISNPPFHDGLASTTNIATDFVKAASANLMRGGLFHIVANRHLPYSDCIAENFGEVNVSAENNRYKIYSNIKR.

Belongs to the methyltransferase superfamily. RsmC family. Monomer.

The protein resides in the cytoplasm. The catalysed reaction is guanosine(1207) in 16S rRNA + S-adenosyl-L-methionine = N(2)-methylguanosine(1207) in 16S rRNA + S-adenosyl-L-homocysteine + H(+). In terms of biological role, specifically methylates the guanine in position 1207 of 16S rRNA in the 30S particle. This chain is Ribosomal RNA small subunit methyltransferase C, found in Shewanella piezotolerans (strain WP3 / JCM 13877).